Consider the following 150-residue polypeptide: Helix-loop-helix protein hlh-12 (150 aa).

The interval 1–24 is disordered; sequence MAKKPRVTKLNTDRRSRANERERQ. Positions 11–24 are enriched in basic and acidic residues; sequence NTDRRSRANERERQ. Residues 13 to 26 form a basic motif region; sequence DRRSRANERERQRV. The region spanning 13 to 65 is the bHLH domain; that stretch reads DRRSRANERERQRVSEMNGMFDVLLNLLPPSHFKTRLSRVQILREATSYIIRL. Residues 27 to 65 form a helix-loop-helix motif region; that stretch reads SEMNGMFDVLLNLLPPSHFKTRLSRVQILREATSYIIRL.

Forms a heterodimer with helix-loop-helix protein hlh-2.

Its subcellular location is the nucleus. Transcription factor which binds the E box motif 5'-GCAGGTG-3'. Involved in migration of the gonadal leader cells; distal tip cells (DTCs) in hermaphrodites, and linker cells in males. Positively regulates expression of alpha integrin ina-1 and ADAMTS protease gon-1. This is Helix-loop-helix protein hlh-12 from Caenorhabditis elegans.